The chain runs to 369 residues: Phenylalanine--tRNA ligase alpha subunit (369 aa).

E269 is a binding site for Mg(2+).

The protein belongs to the class-II aminoacyl-tRNA synthetase family. Phe-tRNA synthetase alpha subunit type 1 subfamily. Tetramer of two alpha and two beta subunits. Mg(2+) is required as a cofactor.

It is found in the cytoplasm. It carries out the reaction tRNA(Phe) + L-phenylalanine + ATP = L-phenylalanyl-tRNA(Phe) + AMP + diphosphate + H(+). This is Phenylalanine--tRNA ligase alpha subunit from Brucella canis (strain ATCC 23365 / NCTC 10854 / RM-666).